The chain runs to 270 residues: Release factor glutamine methyltransferase (270 aa).

Residues 112–116 (GTGSG), Asp135, Trp162, and Asn178 each bind S-adenosyl-L-methionine. 178–181 (NPPY) provides a ligand contact to substrate.

It belongs to the protein N5-glutamine methyltransferase family. PrmC subfamily.

The enzyme catalyses L-glutaminyl-[peptide chain release factor] + S-adenosyl-L-methionine = N(5)-methyl-L-glutaminyl-[peptide chain release factor] + S-adenosyl-L-homocysteine + H(+). In terms of biological role, methylates the class 1 translation termination release factors RF1/PrfA and RF2/PrfB on the glutamine residue of the universally conserved GGQ motif. This chain is Release factor glutamine methyltransferase, found in Bordetella pertussis (strain Tohama I / ATCC BAA-589 / NCTC 13251).